The primary structure comprises 328 residues: Phenylalanine--tRNA ligase alpha subunit (328 aa).

Glutamate 253 serves as a coordination point for Mg(2+).

This sequence belongs to the class-II aminoacyl-tRNA synthetase family. Phe-tRNA synthetase alpha subunit type 1 subfamily. In terms of assembly, tetramer of two alpha and two beta subunits. Mg(2+) serves as cofactor.

It localises to the cytoplasm. The catalysed reaction is tRNA(Phe) + L-phenylalanine + ATP = L-phenylalanyl-tRNA(Phe) + AMP + diphosphate + H(+). The sequence is that of Phenylalanine--tRNA ligase alpha subunit from Coxiella burnetii (strain Dugway 5J108-111).